Here is a 318-residue protein sequence, read N- to C-terminus: Ferredoxin--NADP reductase (318 aa).

FAD contacts are provided by D33, Q41, Y46, V84, F115, D276, and T316.

It belongs to the ferredoxin--NADP reductase type 2 family. In terms of assembly, homodimer. The cofactor is FAD.

It catalyses the reaction 2 reduced [2Fe-2S]-[ferredoxin] + NADP(+) + H(+) = 2 oxidized [2Fe-2S]-[ferredoxin] + NADPH. In Lactobacillus gasseri (strain ATCC 33323 / DSM 20243 / BCRC 14619 / CIP 102991 / JCM 1131 / KCTC 3163 / NCIMB 11718 / NCTC 13722 / AM63), this protein is Ferredoxin--NADP reductase.